The primary structure comprises 520 residues: GMP synthase [glutamine-hydrolyzing] (520 aa).

In terms of domain architecture, Glutamine amidotransferase type-1 spans 12–202; that stretch reads KIIVLDFGSQ…AFDVCGCTGD (191 aa). Catalysis depends on Cys89, which acts as the Nucleophile. Residues His176 and Glu178 contribute to the active site. A GMPS ATP-PPase domain is found at 203 to 395; sequence WSMENFIDME…LGMPDAIVWR (193 aa). 230–236 serves as a coordination point for ATP; that stretch reads SGGVDSS.

As to quaternary structure, homodimer.

The catalysed reaction is XMP + L-glutamine + ATP + H2O = GMP + L-glutamate + AMP + diphosphate + 2 H(+). Its pathway is purine metabolism; GMP biosynthesis; GMP from XMP (L-Gln route): step 1/1. Catalyzes the synthesis of GMP from XMP. The chain is GMP synthase [glutamine-hydrolyzing] from Enterococcus faecalis (strain ATCC 700802 / V583).